Consider the following 289-residue polypeptide: Oxaloacetate decarboxylase (289 aa).

Ser-50 is a binding site for substrate. Asp-88 is a Mg(2+) binding site. Substrate contacts are provided by Arg-159 and His-235.

The protein belongs to the isocitrate lyase/PEP mutase superfamily. Oxaloacetate decarboxylase family. In terms of assembly, homotetramer; dimer of dimers. The cofactor is Mg(2+).

The catalysed reaction is oxaloacetate + H(+) = pyruvate + CO2. Its function is as follows. Catalyzes the decarboxylation of oxaloacetate into pyruvate. Seems to play a role in maintaining cellular concentrations of bicarbonate and pyruvate. In Pseudomonas putida (strain ATCC 47054 / DSM 6125 / CFBP 8728 / NCIMB 11950 / KT2440), this protein is Oxaloacetate decarboxylase.